The primary structure comprises 264 residues: Thymidylate synthase (264 aa).

Residue arginine 21 participates in dUMP binding. Histidine 51 contributes to the (6R)-5,10-methylene-5,6,7,8-tetrahydrofolate binding site. 126 to 127 (RR) provides a ligand contact to dUMP. The Nucleophile role is filled by cysteine 146. Residues 166-169 (RSCD), asparagine 177, and 207-209 (HLY) each bind dUMP. Residue aspartate 169 participates in (6R)-5,10-methylene-5,6,7,8-tetrahydrofolate binding. (6R)-5,10-methylene-5,6,7,8-tetrahydrofolate is bound at residue alanine 263.

It belongs to the thymidylate synthase family. Bacterial-type ThyA subfamily. As to quaternary structure, homodimer.

Its subcellular location is the cytoplasm. The catalysed reaction is dUMP + (6R)-5,10-methylene-5,6,7,8-tetrahydrofolate = 7,8-dihydrofolate + dTMP. Its pathway is pyrimidine metabolism; dTTP biosynthesis. In terms of biological role, catalyzes the reductive methylation of 2'-deoxyuridine-5'-monophosphate (dUMP) to 2'-deoxythymidine-5'-monophosphate (dTMP) while utilizing 5,10-methylenetetrahydrofolate (mTHF) as the methyl donor and reductant in the reaction, yielding dihydrofolate (DHF) as a by-product. This enzymatic reaction provides an intracellular de novo source of dTMP, an essential precursor for DNA biosynthesis. The polypeptide is Thymidylate synthase (Klebsiella pneumoniae subsp. pneumoniae (strain ATCC 700721 / MGH 78578)).